We begin with the raw amino-acid sequence, 331 residues long: Putative ankyrin repeat protein FPV012 (331 aa).

4 ANK repeats span residues 11–40 (DGYTSLYKETAKGNIKKVVELLYKGVNPNT), 44–73 (DSYTPLHIAAKTGNIKIIRRLIRYGANVDK), 77–106 (DGYTALLIAICTGDIKTCNVLLDEGANPNY), and 110–139 (YGITPLVRIISYYRPTILKLLMDRGANCNQ).

The chain is Putative ankyrin repeat protein FPV012 from Vertebrata (FPV).